A 134-amino-acid polypeptide reads, in one-letter code: Calcitonin gene-related peptide 2 (134 aa).

The N-terminal stretch at 1-26 (MDFWKFFPFLALSSMWVLCLASSLQA) is a signal peptide. A propeptide spanning residues 27-86 (APFRSALESSLDLGTLSDQEKHLLLAALIQDYEQKARKLEQEEQETEGSRKGSSSSVISQ) is cleaved from the precursor. Residues 65–91 (LEQEEQETEGSRKGSSSSVISQKRSCN) form a disordered region. Positions 77 to 89 (KGSSSSVISQKRS) are enriched in low complexity. Cysteines 90 and 95 form a disulfide. Phe125 carries the phenylalanine amide modification. Positions 131-134 (DLRV) are excised as a propeptide.

The protein belongs to the calcitonin family.

Its subcellular location is the secreted. In terms of biological role, CALCB/CGRP2 is a peptide hormone that induces vasodilation mediated by the CALCRL-RAMP1 receptor complex. Dilates a variety of vessels including the coronary, cerebral and systemic vasculature. Its abundance in the CNS also points toward a neurotransmitter or neuromodulator role. The chain is Calcitonin gene-related peptide 2 from Rattus norvegicus (Rat).